A 478-amino-acid chain; its full sequence is MTSGTVKCHFCKKDDSEDKGQPIWVGCEFCDGWCHLTCVPIQFVVPKLENPSQLLAFKEKHVESFKCTLHDESKCALLKLNGVSVGTEDIAFTKRNRLRNKRPIDYIALNEGNDKRLKHEHPHTQAFLACFEKWKDPKAISSSELESDFQIIKVPLRVSDPADSGMYVISANELGLVDSKDHVKLNVEYLTKIMGDDYPLDVMDVQTQMNEKWTLSQWNEYYSHTSPSDRDRIRNVISLEVSHVESFKDGIRRPNAVNNNDLVDIVWNFGRTETDIERPKVTKYILMSVGNAYTDFHLDFAGTSVYYNVISGSKKFILFPPTDYNLKKYREWCDNDNQNDIFLGDQLEAGIAMELTEGNLFMIPCGYIHAVYTPEDSFIVGGNFLTLRDITTQLNVVEIEHQTKVPKKFTFPQFESVMGKTCEWLLNSDHIQSISSEDIENLVKYLSSSNIKYKPINYQSKKELITELKNKIIKFEHT.

The PHD-type zinc finger occupies 6–70; sequence VKCHFCKKDD…HVESFKCTLH (65 aa). One can recognise a JmjC domain in the interval 242–401; that stretch reads SHVESFKDGI…TQLNVVEIEH (160 aa). Thr-294 contacts substrate. The Fe cation site is built by His-297 and Asp-299. Residue Lys-314 participates in substrate binding. His-369 serves as a coordination point for Fe cation.

The protein belongs to the JHDM1 histone demethylase family. Fe(2+) serves as cofactor.

It localises to the nucleus. The enzyme catalyses N(6),N(6)-dimethyl-L-lysyl(36)-[histone H3] + 2 2-oxoglutarate + 2 O2 = L-lysyl(36)-[histone H3] + 2 formaldehyde + 2 succinate + 2 CO2. In terms of biological role, histone demethylase that specifically demethylates 'Lys-36' of histone H3, thereby playing a central role in histone code. This Kluyveromyces lactis (strain ATCC 8585 / CBS 2359 / DSM 70799 / NBRC 1267 / NRRL Y-1140 / WM37) (Yeast) protein is JmjC domain-containing histone demethylation protein 1 (JHD1).